A 274-amino-acid chain; its full sequence is N-acetylmuramic acid 6-phosphate etherase (274 aa).

The SIS domain occupies 52-215; the sequence is IVPRMEQGGR…STSIMIRLGR (164 aa). The Proton donor role is filled by Glu-80. Glu-111 is a catalytic residue.

The protein belongs to the GCKR-like family. MurNAc-6-P etherase subfamily. Homodimer.

The catalysed reaction is N-acetyl-D-muramate 6-phosphate + H2O = N-acetyl-D-glucosamine 6-phosphate + (R)-lactate. Its pathway is amino-sugar metabolism; N-acetylmuramate degradation. In terms of biological role, specifically catalyzes the cleavage of the D-lactyl ether substituent of MurNAc 6-phosphate, producing GlcNAc 6-phosphate and D-lactate. This is N-acetylmuramic acid 6-phosphate etherase from Porphyromonas gingivalis (strain ATCC 33277 / DSM 20709 / CIP 103683 / JCM 12257 / NCTC 11834 / 2561).